A 237-amino-acid polypeptide reads, in one-letter code: Ribonuclease PH (237 aa).

Residues R86 and 124-126 (GTR) each bind phosphate.

It belongs to the RNase PH family. Homohexameric ring arranged as a trimer of dimers.

It catalyses the reaction tRNA(n+1) + phosphate = tRNA(n) + a ribonucleoside 5'-diphosphate. Phosphorolytic 3'-5' exoribonuclease that plays an important role in tRNA 3'-end maturation. Removes nucleotide residues following the 3'-CCA terminus of tRNAs; can also add nucleotides to the ends of RNA molecules by using nucleoside diphosphates as substrates, but this may not be physiologically important. Probably plays a role in initiation of 16S rRNA degradation (leading to ribosome degradation) during starvation. The polypeptide is Ribonuclease PH (Shewanella oneidensis (strain ATCC 700550 / JCM 31522 / CIP 106686 / LMG 19005 / NCIMB 14063 / MR-1)).